The primary structure comprises 166 residues: NAD(P)H-quinone oxidoreductase subunit I, chloroplastic (166 aa).

4Fe-4S ferredoxin-type domains lie at 55-84 and 95-124; these read GRIH…VDWK and LNYS…MTEE. Cys-64, Cys-67, Cys-70, Cys-74, Cys-104, Cys-107, Cys-110, and Cys-114 together coordinate [4Fe-4S] cluster.

It belongs to the complex I 23 kDa subunit family. As to quaternary structure, NDH is composed of at least 16 different subunits, 5 of which are encoded in the nucleus. It depends on [4Fe-4S] cluster as a cofactor.

Its subcellular location is the plastid. It is found in the chloroplast thylakoid membrane. The catalysed reaction is a plastoquinone + NADH + (n+1) H(+)(in) = a plastoquinol + NAD(+) + n H(+)(out). The enzyme catalyses a plastoquinone + NADPH + (n+1) H(+)(in) = a plastoquinol + NADP(+) + n H(+)(out). NDH shuttles electrons from NAD(P)H:plastoquinone, via FMN and iron-sulfur (Fe-S) centers, to quinones in the photosynthetic chain and possibly in a chloroplast respiratory chain. The immediate electron acceptor for the enzyme in this species is believed to be plastoquinone. Couples the redox reaction to proton translocation, and thus conserves the redox energy in a proton gradient. The polypeptide is NAD(P)H-quinone oxidoreductase subunit I, chloroplastic (Marshallia caespitosa (Barbara's buttons)).